We begin with the raw amino-acid sequence, 385 residues long: Probable protein phosphatase 2C 79 (385 aa).

The first 18 residues, 1-18 (MLSLFFNFLTSCLWPSSS), serve as a signal peptide directing secretion. The region spanning 47 to 356 (DFSMAVVQAN…DDITVVVLFL (310 aa)) is the PPM-type phosphatase domain. Residue serine 76 is modified to Phosphoserine. Mn(2+)-binding residues include aspartate 87, glycine 88, aspartate 288, and aspartate 347.

It belongs to the PP2C family. The cofactor is Mg(2+). Mn(2+) is required as a cofactor.

The catalysed reaction is O-phospho-L-seryl-[protein] + H2O = L-seryl-[protein] + phosphate. It carries out the reaction O-phospho-L-threonyl-[protein] + H2O = L-threonyl-[protein] + phosphate. Its function is as follows. May dephosphorylate and repress plasma membrane H(+)-ATPases (PM H(+)-ATPases, e.g. AHA1 and AHA2), thus influencing negatively plant growth and fitness. This chain is Probable protein phosphatase 2C 79, found in Arabidopsis thaliana (Mouse-ear cress).